Reading from the N-terminus, the 201-residue chain is Phosphoprotein (201 aa).

Positions 1–70 (MATRPSSLVD…DQRTGREQLS (70 aa)) are disordered. 2 consecutive short sequence motifs (nuclear localization signal) follow at residues 29-36 (PRPRKIPR) and 181-193 (PPRI…SAPT).

Homomultimer; only active in its oligomeric state. Interacts with nucleoprotein/N. Interacts with matrix/M protein. Interacts with host TBK1. Interacts with polymerase L. Interacts with host HMGB1; this interaction is required to stabilize RNP on chromosomes. Phosphorylated by host PKC epsilon and casein kinase II.

Its subcellular location is the host nucleus. It localises to the host cytoplasm. Its function is as follows. Essential component of the RNA polymerase transcription and replication complex. Acts as a scaffold which brings L in close proximity to the N-RNA complex. Plays a role in the segregation of the viral genome in host daughter cells during mitosis by interacting with host HMGB1, a host chromatin-remodeling DNA architectural protein, thereby stabilizing RNP on chromosomes. Interacts with host TBK1 and thus interferes with activation of cellular antiviral state. Inhibits cellular histone acetyltransferase activities. The polypeptide is Phosphoprotein (P/X) (Bos taurus (Bovine)).